The primary structure comprises 644 residues: Tubulin--tyrosine ligase-like protein 12 (644 aa).

Over residues 1–13 (MEAERGPERRPAE) the composition is skewed to basic and acidic residues. The tract at residues 1-25 (MEAERGPERRPAERSSPGQTPEEGA) is disordered. In terms of domain architecture, TTL spans 300–644 (PHGHIFKVYT…PGGCHVTCLV (345 aa)). ATP contacts are provided by residues 450 to 453 (SKYI), K468, and D470.

The protein belongs to the tubulin--tyrosine ligase family. Interacts with MAVS; the interaction prevents MAVS binding to TBK1 and IKBKE. Interacts (via N-terminus) with TBK1 (via protein kinase domain). Interacts (via TTL domain) with IKBKE (via protein kinase domain). Interacts with tubulin alpha. Interacts with histone H3 and histone H4 (when trimethylated at 'Lys-20' (H4K20me3)). Interacts with CBX3. As to expression, expressed in the basal layer of prostate and endothelial cells. Increased expression in prostatic intraepithelial neoplasia and metastatic lesions.

It localises to the cytoplasm. The protein localises to the midbody. Its subcellular location is the cytoskeleton. It is found in the microtubule organizing center. The protein resides in the centrosome. It localises to the spindle. The protein localises to the nucleus. Functionally, negatively regulates post-translational modifications of tubulin, including detyrosination of the C-terminus and polyglutamylation of glutamate residues. Also, indirectly promotes histone H4 trimethylation at 'Lys-20' (H4K20me3). Probably by controlling tubulin and/or histone H4 post-translational modifications, plays a role in mitosis and in maintaining chromosome number stability. During RNA virus-mediated infection, acts as a negative regulator of the RIG-I pathway by preventing MAVS binding to TBK1 and IKBKE. This chain is Tubulin--tyrosine ligase-like protein 12 (TTLL12), found in Homo sapiens (Human).